The following is a 332-amino-acid chain: Formamidase (332 aa).

One can recognise a CN hydrolase domain in the interval 14-259 (FLTALIQYPV…WEIVTAEVYP (246 aa)). Catalysis depends on Glu-60, which acts as the Proton acceptor. Catalysis depends on Lys-132, which acts as the Proton donor. Residue Cys-165 is the Nucleophile of the active site.

Belongs to the carbon-nitrogen hydrolase superfamily. Aliphatic amidase family.

The catalysed reaction is formamide + H2O = formate + NH4(+). Is an aliphatic amidase with a restricted substrate specificity, as it only hydrolyzes formamide. The chain is Formamidase from Bacillus thuringiensis (strain Al Hakam).